Consider the following 121-residue polypeptide: Large ribosomal subunit protein bL12 (121 aa).

This sequence belongs to the bacterial ribosomal protein bL12 family. Homodimer. Part of the ribosomal stalk of the 50S ribosomal subunit. Forms a multimeric L10(L12)X complex, where L10 forms an elongated spine to which 2 to 4 L12 dimers bind in a sequential fashion. Binds GTP-bound translation factors.

In terms of biological role, forms part of the ribosomal stalk which helps the ribosome interact with GTP-bound translation factors. Is thus essential for accurate translation. In Vibrio atlanticus (strain LGP32) (Vibrio splendidus (strain Mel32)), this protein is Large ribosomal subunit protein bL12.